A 160-amino-acid polypeptide reads, in one-letter code: Small ribosomal subunit protein bS6 (160 aa).

This sequence belongs to the bacterial ribosomal protein bS6 family.

In terms of biological role, binds together with bS18 to 16S ribosomal RNA. This is Small ribosomal subunit protein bS6 from Ureaplasma urealyticum serovar 10 (strain ATCC 33699 / Western).